Consider the following 388-residue polypeptide: Spermidine/putrescine import ATP-binding protein PotA (388 aa).

Residues 17–247 enclose the ABC transporter domain; sequence IEIDHVTKRF…PATVFVANFI (231 aa). Residue 49-56 participates in ATP binding; sequence GPSGCGKT.

Belongs to the ABC transporter superfamily. Spermidine/putrescine importer (TC 3.A.1.11.1) family. The complex is composed of two ATP-binding proteins (PotA), two transmembrane proteins (PotB and PotC) and a solute-binding protein (PotD).

It is found in the cell membrane. The enzyme catalyses ATP + H2O + polyamine-[polyamine-binding protein]Side 1 = ADP + phosphate + polyamineSide 2 + [polyamine-binding protein]Side 1.. Functionally, part of the ABC transporter complex PotABCD involved in spermidine/putrescine import. Responsible for energy coupling to the transport system. This chain is Spermidine/putrescine import ATP-binding protein PotA, found in Mycobacterium sp. (strain KMS).